The following is a 68-amino-acid chain: Large ribosomal subunit protein bL32 (68 aa).

This sequence belongs to the bacterial ribosomal protein bL32 family.

This chain is Large ribosomal subunit protein bL32, found in Onion yellows phytoplasma (strain OY-M).